The sequence spans 51 residues: Ribosome biogenesis protein Nop10 (51 aa).

The protein belongs to the NOP10 family.

Its function is as follows. Involved in ribosome biogenesis; more specifically in 18S rRNA pseudouridylation and in cleavage of pre-rRNA. The sequence is that of Ribosome biogenesis protein Nop10 from Nitrosopumilus maritimus (strain SCM1).